Consider the following 247-residue polypeptide: RNA-free ribonuclease P (247 aa).

Positions 223 to 247 are disordered; sequence SPEGEKEKGEADKKKKSHSEEAEFI.

This sequence belongs to the HARP family.

The enzyme catalyses Endonucleolytic cleavage of RNA, removing 5'-extranucleotides from tRNA precursor.. Its function is as follows. RNA-free RNase P that catalyzes the removal of the 5'-leader sequence from pre-tRNA to produce the mature 5'-terminus. This Methanosarcina acetivorans (strain ATCC 35395 / DSM 2834 / JCM 12185 / C2A) protein is RNA-free ribonuclease P.